Consider the following 270-residue polypeptide: Sulfur carrier protein FdhD (270 aa).

Basic and acidic residues-rich tracts occupy residues 1–10 (MSMQDHDRTE) and 20–30 (RHLDGSSRPDW). The tract at residues 1–30 (MSMQDHDRTEQGMTSLAVTRHLDGSSRPDW) is disordered. Cys-117 acts as the Cysteine persulfide intermediate in catalysis.

Belongs to the FdhD family.

The protein localises to the cytoplasm. Its function is as follows. Required for formate dehydrogenase (FDH) activity. Acts as a sulfur carrier protein that transfers sulfur from IscS to the molybdenum cofactor prior to its insertion into FDH. In Chromobacterium violaceum (strain ATCC 12472 / DSM 30191 / JCM 1249 / CCUG 213 / NBRC 12614 / NCIMB 9131 / NCTC 9757 / MK), this protein is Sulfur carrier protein FdhD.